The following is a 216-amino-acid chain: Adenylate kinase (216 aa).

Position 10–15 (10–15) interacts with ATP; that stretch reads GAGKGT. The NMP stretch occupies residues 30 to 59; that stretch reads STGDMLRAAVKAGTKLGQQVQGIMAAGKLV. AMP is bound by residues Thr-31, Arg-36, 57–59, 85–88, and Gln-92; these read KLV and GFPR. The segment at 122–159 is LID; the sequence is GRRVHMPSGRIYHLKFNPPKITDKDDMTGESLTLRKDD. ATP is bound by residues Arg-123 and 132-133; that span reads IY. AMP contacts are provided by Arg-156 and Arg-167. Arg-200 lines the ATP pocket.

This sequence belongs to the adenylate kinase family. As to quaternary structure, monomer.

The protein resides in the cytoplasm. It carries out the reaction AMP + ATP = 2 ADP. Its pathway is purine metabolism; AMP biosynthesis via salvage pathway; AMP from ADP: step 1/1. Its function is as follows. Catalyzes the reversible transfer of the terminal phosphate group between ATP and AMP. Plays an important role in cellular energy homeostasis and in adenine nucleotide metabolism. The sequence is that of Adenylate kinase from Hamiltonella defensa subsp. Acyrthosiphon pisum (strain 5AT).